We begin with the raw amino-acid sequence, 493 residues long: Alpha-amylase-related protein (493 aa).

An N-terminal signal peptide occupies residues 1 to 19 (MFKFALTLTLCLAGSLSLA). A Pyrrolidone carboxylic acid modification is found at glutamine 20. An intrachain disulfide couples cysteine 47 to cysteine 103. Residues asparagine 117, glutamine 168, and aspartate 177 each contribute to the Ca(2+) site. The cysteines at positions 156 and 170 are disulfide-linked. Residue arginine 205 participates in chloride binding. Catalysis depends on aspartate 207, which acts as the Nucleophile. Position 211 (histidine 211) interacts with Ca(2+). Catalysis depends on glutamate 244, which acts as the Proton donor. The chloride site is built by asparagine 307 and arginine 342. Disulfide bonds link cysteine 375/cysteine 381, cysteine 417/cysteine 440, and cysteine 447/cysteine 459.

It belongs to the glycosyl hydrolase 13 family. Monomer. The cofactor is Ca(2+). Requires chloride as cofactor.

It localises to the secreted. The enzyme catalyses Endohydrolysis of (1-&gt;4)-alpha-D-glucosidic linkages in polysaccharides containing three or more (1-&gt;4)-alpha-linked D-glucose units.. In Drosophila sechellia (Fruit fly), this protein is Alpha-amylase-related protein (Amyrel).